Consider the following 230-residue polypeptide: Biosynthetic peptidoglycan transglycosylase (230 aa).

The chain crosses the membrane as a helical span at residues 11–31 (VLLVLVALFVLYQLWIFTLVL).

Belongs to the glycosyltransferase 51 family.

It is found in the cell inner membrane. The enzyme catalyses [GlcNAc-(1-&gt;4)-Mur2Ac(oyl-L-Ala-gamma-D-Glu-L-Lys-D-Ala-D-Ala)](n)-di-trans,octa-cis-undecaprenyl diphosphate + beta-D-GlcNAc-(1-&gt;4)-Mur2Ac(oyl-L-Ala-gamma-D-Glu-L-Lys-D-Ala-D-Ala)-di-trans,octa-cis-undecaprenyl diphosphate = [GlcNAc-(1-&gt;4)-Mur2Ac(oyl-L-Ala-gamma-D-Glu-L-Lys-D-Ala-D-Ala)](n+1)-di-trans,octa-cis-undecaprenyl diphosphate + di-trans,octa-cis-undecaprenyl diphosphate + H(+). The protein operates within cell wall biogenesis; peptidoglycan biosynthesis. Functionally, peptidoglycan polymerase that catalyzes glycan chain elongation from lipid-linked precursors. The protein is Biosynthetic peptidoglycan transglycosylase of Aromatoleum aromaticum (strain DSM 19018 / LMG 30748 / EbN1) (Azoarcus sp. (strain EbN1)).